The chain runs to 214 residues: Redox-sensing transcriptional repressor Rex (214 aa).

Residues 16 to 55 constitute a DNA-binding region (H-T-H motif); that stretch reads LYYRYLIFLNDEGKEKVSSTELAEAVQVDSASIRRDFSYF. NAD(+) is bound at residue 90 to 95; that stretch reads GVGNMG.

It belongs to the transcriptional regulatory Rex family. As to quaternary structure, homodimer.

It is found in the cytoplasm. In terms of biological role, modulates transcription in response to changes in cellular NADH/NAD(+) redox state. The sequence is that of Redox-sensing transcriptional repressor Rex from Lactobacillus gasseri (strain ATCC 33323 / DSM 20243 / BCRC 14619 / CIP 102991 / JCM 1131 / KCTC 3163 / NCIMB 11718 / NCTC 13722 / AM63).